A 1090-amino-acid polypeptide reads, in one-letter code: Solute carrier family 38 member 10 (1090 aa).

The next 10 helical transmembrane spans lie at 9-31 (WGLI…PFCF), 36-58 (IVLG…MFLV), 84-104 (LVET…YVVI), 123-143 (TVRV…LSLQ), 153-173 (FSAM…LSSL), 229-249 (IFAS…FFGY), 272-292 (MIRV…ILPC), 323-343 (VLTL…PNVE), 345-365 (ILGF…PALI), and 378-398 (VVLW…LSVT). Position 441 is a phosphoserine (Ser-441). 6 stretches are compositionally biased toward basic and acidic residues: residues 441–454 (SQEK…KEVL), 493–508 (EAHR…KVVV), 517–528 (PEEKKPPPRLPD), 544–560 (ESEK…EGKR), 587–596 (PRKEDSRPGN), and 607–623 (DSVE…REPA). Disordered regions lie at residues 441–675 (SQEK…AGSK), 729–831 (EIRQ…IDLR), and 857–1037 (KAAP…ELAP). 2 positions are modified to phosphoserine: Ser-608 and Ser-636. Basic and acidic residues-rich tracts occupy residues 654–665 (EAAEQREKKEAE), 729–744 (EIRQ…KPKP), and 758–767 (GQEEEAEHAG). Thr-769 carries the post-translational modification Phosphothreonine. The residue at position 887 (Ser-887) is a Phosphoserine. Residues 923–936 (RQSGPTKAPVQTQA) show a composition bias toward polar residues. Composition is skewed to basic and acidic residues over residues 954–973 (PEVR…EQHK), 1004–1013 (ENAKPNRDLK), and 1026–1037 (DLASHPEQELAP).

Belongs to the amino acid/polyamine transporter 2 family. In terms of tissue distribution, expressed in neurons, astrocytes and epithelial cells scattered throughout the central nervous system structures including striatum, ependyma, cerebral cortex, hippocampus, hypothalamus, thalamus, pons, and cerebellum (at protein level). Highly expressed in paraventricular hypothalamic nucleus, suprachiasmatic nucleus, anterior hypothalamic area central part, in lateral ventricule and in dorsal 3rd ventricule (at protein level). Expressed in choroid plexus epithelial cells (at protein level).

The protein localises to the membrane. It catalyses the reaction L-glutamate(out) = L-glutamate(in). It carries out the reaction L-glutamine(out) = L-glutamine(in). The catalysed reaction is L-alanine(in) = L-alanine(out). The enzyme catalyses L-serine(in) = L-serine(out). It catalyses the reaction L-leucine(in) = L-leucine(out). In terms of biological role, facilitates bidirectional transport of amino acids. May act as a glutamate sensor that regulates glutamate-glutamine cycle and mTOR signaling in the brain. The transport mechanism remains to be elucidated. This is Solute carrier family 38 member 10 from Mus musculus (Mouse).